A 285-amino-acid polypeptide reads, in one-letter code: Sulfotransferase 2A2 (285 aa).

Residues lysine 44, serine 45, glycine 46, threonine 47, asparagine 48, and tryptophan 49 each contribute to the 3'-phosphoadenylyl sulfate site. Residue histidine 99 is the Proton acceptor of the active site. Residues arginine 121, serine 129, tyrosine 184, serine 218, methionine 223, arginine 247, lysine 248, and glycine 249 each coordinate 3'-phosphoadenylyl sulfate.

It belongs to the sulfotransferase 1 family.

Its subcellular location is the cytoplasm. The enzyme catalyses an alcohol + 3'-phosphoadenylyl sulfate = an alkyl sulfate + adenosine 3',5'-bisphosphate + H(+). Functionally, sulfotransferase that utilizes 3'-phospho-5'-adenylyl sulfate (PAPS) as sulfonate donor to catalyze the sulfate conjugation of a potential wide variety of acceptor molecules bearing a hydroxyl group. Sulfonation increases the water solubility of most compounds, and therefore their renal excretion, but it can also result in bioactivation to form active metabolites. The polypeptide is Sulfotransferase 2A2 (Mus musculus (Mouse)).